We begin with the raw amino-acid sequence, 138 residues long: Cysteine desulfuration protein SufE (138 aa).

The active-site Cysteine persulfide intermediate is the C51.

It belongs to the SufE family. Homodimer. Interacts with SufS.

The protein localises to the cytoplasm. The protein operates within cofactor biosynthesis; iron-sulfur cluster biosynthesis. Functionally, participates in cysteine desulfuration mediated by SufS. Cysteine desulfuration mobilizes sulfur from L-cysteine to yield L-alanine and constitutes an essential step in sulfur metabolism for biosynthesis of a variety of sulfur-containing biomolecules. Functions as a sulfur acceptor for SufS, by mediating the direct transfer of the sulfur atom from the S-sulfanylcysteine of SufS, an intermediate product of cysteine desulfuration process. The chain is Cysteine desulfuration protein SufE from Shigella boydii serotype 18 (strain CDC 3083-94 / BS512).